The chain runs to 588 residues: Adenine deaminase (588 aa).

It belongs to the metallo-dependent hydrolases superfamily. Adenine deaminase family. Homodimer. It depends on Mn(2+) as a cofactor.

The catalysed reaction is adenine + H2O + H(+) = hypoxanthine + NH4(+). In Shigella flexneri serotype 5b (strain 8401), this protein is Adenine deaminase.